The following is a 122-amino-acid chain: Large ribosomal subunit protein uL14 (122 aa).

It belongs to the universal ribosomal protein uL14 family. In terms of assembly, part of the 50S ribosomal subunit. Forms a cluster with proteins L3 and L19. In the 70S ribosome, L14 and L19 interact and together make contacts with the 16S rRNA in bridges B5 and B8.

Binds to 23S rRNA. Forms part of two intersubunit bridges in the 70S ribosome. This is Large ribosomal subunit protein uL14 from Nitrobacter winogradskyi (strain ATCC 25391 / DSM 10237 / CIP 104748 / NCIMB 11846 / Nb-255).